Consider the following 80-residue polypeptide: Exodeoxyribonuclease 7 small subunit (80 aa).

The protein belongs to the XseB family. In terms of assembly, heterooligomer composed of large and small subunits.

The protein localises to the cytoplasm. The catalysed reaction is Exonucleolytic cleavage in either 5'- to 3'- or 3'- to 5'-direction to yield nucleoside 5'-phosphates.. Functionally, bidirectionally degrades single-stranded DNA into large acid-insoluble oligonucleotides, which are then degraded further into small acid-soluble oligonucleotides. The protein is Exodeoxyribonuclease 7 small subunit of Marinomonas sp. (strain MWYL1).